The sequence spans 424 residues: Pachytene checkpoint protein 2 homolog (424 aa).

Residue 171 to 178 participates in ATP binding; the sequence is GPPGTGKT.

It belongs to the AAA ATPase family. PCH2 subfamily.

In terms of biological role, plays a key role in chromosome recombination and chromosome structure development during meiosis. Required at early steps in meiotic recombination that leads to non-crossovers pathways. Also needed for efficient completion of homologous synapsis by influencing crossover distribution along the chromosomes affecting both crossovers and non-crossovers pathways. The chain is Pachytene checkpoint protein 2 homolog (trip13) from Danio rerio (Zebrafish).